The chain runs to 115 residues: Regulator of ribonuclease activity B (115 aa).

Belongs to the RraB family. Interacts with the C-terminal region of Rne.

The protein resides in the cytoplasm. Globally modulates RNA abundance by binding to RNase E (Rne) and regulating its endonucleolytic activity. Can modulate Rne action in a substrate-dependent manner by altering the composition of the degradosome. This is Regulator of ribonuclease activity B from Aeromonas hydrophila subsp. hydrophila (strain ATCC 7966 / DSM 30187 / BCRC 13018 / CCUG 14551 / JCM 1027 / KCTC 2358 / NCIMB 9240 / NCTC 8049).